We begin with the raw amino-acid sequence, 237 residues long: Oligoribonuclease, mitochondrial (237 aa).

A mitochondrion-targeting transit peptide spans 1–25 (MLGGSLGSRLLRGVGGTRGQFRARG). The Exonuclease domain maps to 43-207 (MVWVDLEMTG…DDISESIKEL (165 aa)). Mg(2+) contacts are provided by Asp47 and Glu49. Ser92 carries the post-translational modification Phosphoserine. Residue Tyr122 is modified to Phosphotyrosine. Asp147 contributes to the Mg(2+) binding site. Lys173 is subject to N6-acetyllysine. His194 is an active-site residue. Asp199 contributes to the Mg(2+) binding site.

This sequence belongs to the oligoribonuclease family. Homodimer. Homotetramer. Requires Mn(2+) as cofactor. The cofactor is Mg(2+).

The protein localises to the mitochondrion intermembrane space. It localises to the mitochondrion matrix. It is found in the mitochondrion. Its subcellular location is the cytoplasm. The protein resides in the nucleus. 3'-to-5'exoribonuclease that preferentially degrades DNA and RNA oligonucleotides composed of only two nucleotides. Binds and degrades longer oligonucleotides with a lower affinity. Plays dual roles in mitochondria, scavenging nanoRNAs (small RNA oligonucleotides of &lt;5 nucleotides) that are produced by the degradosome and clearing short RNAs that are generated by RNA processing. Essential for correct initiation of mitochondrial transcription, degrading mitochondrial RNA dinucleotides to prevent RNA-primed transcription at non-canonical sites in the mitochondrial genome. Essential for embryonic development. In Bos taurus (Bovine), this protein is Oligoribonuclease, mitochondrial (REXO2).